A 261-amino-acid polypeptide reads, in one-letter code: uncharacterized protein (261 aa).

Residues 15-75 (SINPEDIISG…AMTDRALSKY (61 aa)) form the HTH tetR-type domain. Positions 38–57 (SMPLLGKHLGVGVTSIYWYF) form a DNA-binding region, H-T-H motif. Residues 234-261 (AAGEVAVRRPTATADAPTPGARAKAVAR) form a disordered region. Residues 241-261 (RRPTATADAPTPGARAKAVAR) are compositionally biased toward low complexity.

This is an uncharacterized protein from Mycobacterium bovis (strain ATCC BAA-935 / AF2122/97).